We begin with the raw amino-acid sequence, 311 residues long: Pyrimidine-specific ribonucleoside hydrolase RihA (311 aa).

His-240 is a catalytic residue.

It belongs to the IUNH family. RihA subfamily.

Hydrolyzes with equal efficiency cytidine or uridine to ribose and cytosine or uracil, respectively. The protein is Pyrimidine-specific ribonucleoside hydrolase RihA of Escherichia coli (strain K12 / MC4100 / BW2952).